The following is a 108-amino-acid chain: MTDTPVEESLFQIIHCFHQYAARQGDMETLSLQELQALLMDNMPRFMDSLGRKEPYYITELFQAADKNKDNQICFDEFLYILGKLVKDYHLQYHRQLCARYCAQHSLY.

Positions 53 to 88 (KEPYYITELFQAADKNKDNQICFDEFLYILGKLVKD) constitute an EF-hand domain. 5 residues coordinate Ca(2+): Asp66, Asn68, Asp70, Gln72, and Glu77.

This sequence belongs to the S-100 family.

The protein is Protein S100-A15A (S100A15A) of Pongo abelii (Sumatran orangutan).